A 29-amino-acid chain; its full sequence is NAD-reducing hydrogenase HoxS subunit delta (29 aa).

Residues 1 to 11 (MKHSEKNEIAS) show a composition bias toward basic and acidic residues. The tract at residues 1–29 (MKHSEKNEIASHELPTTPLDPVLAAGRES) is disordered.

This sequence belongs to the [NiFe]/[NiFeSe] hydrogenase small subunit family. In terms of assembly, tetramer of an alpha and a gamma subunits (flavin-containing dimer), and a delta and a nickel-containing beta subunits (hydrogenase dimer). [4Fe-4S] cluster is required as a cofactor. [3Fe-4S] cluster serves as cofactor. The cofactor is [2Fe-2S] cluster. Requires FMN as cofactor. It depends on Ni(2+) as a cofactor.

The protein resides in the cytoplasm. The enzyme catalyses H2 + NAD(+) = NADH + H(+). This chain is NAD-reducing hydrogenase HoxS subunit delta (hoxY), found in Rhodococcus opacus (Nocardia opaca).